The primary structure comprises 455 residues: uncharacterized protein (455 aa).

N-linked (GlcNAc...) asparagine glycans are attached at residues Asn42, Asn49, and Asn70. 4 consecutive transmembrane segments (helical) span residues Ala127–Phe147, Ser153–Ile173, Ile177–Tyr197, and Tyr377–Phe397. Asn403 carries an N-linked (GlcNAc...) asparagine glycan.

It is found in the membrane. This is an uncharacterized protein from Caenorhabditis elegans.